The following is a 29-amino-acid chain: Kalata-B4 (29 aa).

A cross-link (cyclopeptide (Gly-Asp)) is located at residues 1 to 29; it reads GLPVCGETCVGGTCNTPGCTCSWPVCTRD. Cystine bridges form between C5–C19, C9–C21, and C14–C26.

This is a cyclic peptide.

Functionally, probably participates in a plant defense mechanism. The sequence is that of Kalata-B4 from Oldenlandia affinis.